The primary structure comprises 912 residues: DNA (cytosine-5)-methyltransferase 3A (912 aa).

Disordered regions lie at residues 1 to 178 (MPAM…GWES) and 221 to 286 (IAGM…EYED). Basic and acidic residues predominate over residues 17–40 (AEREEDRKDGEEQEEPRGKEERQE). The span at 47–57 (KVGRPGRKRKH) shows a compositional bias: basic residues. Over residues 74 to 83 (KSPSMAQDSG) the composition is skewed to polar residues. The residue at position 105 (Ser-105) is a Phosphoserine. The span at 113–128 (GAPAEGEGAAETLPEA) shows a compositional bias: low complexity. At Thr-124 the chain carries Phosphothreonine. Over residues 149-167 (AGKEQKETNIESMKMEGSR) the composition is skewed to basic and acidic residues. A Glycyl lysine isopeptide (Lys-Gly) (interchain with G-Cter in SUMO2) cross-link involves residue Lys-162. Arg-171 is subject to Omega-N-methylarginine. The interval 199 to 403 (SKRKRDEWLA…DTAKAVEVQN (205 aa)) is interaction with DNMT1 and DNMT3B. A phosphoserine mark is found at Ser-243 and Ser-255. Residues 246 to 260 (AVQQPTDPASPTVAT) are compositionally biased toward polar residues. Thr-261 is modified (phosphothreonine). Position 267 is a phosphoserine (Ser-267). A compositionally biased stretch (basic and acidic residues) spans 269–279 (AGDKNATKAGD). A PWWP domain is found at 292–350 (IGELVWGKLRGFSWWPGRIVSWWMTGRSRAAEGTRWVMWFGDGKFSVVCVEKLMPLSSF). 2 positions are modified to phosphoserine: Ser-390 and Ser-393. The tract at residues 447-466 (AYAPPPPAKKPRKSTAEKPK) is disordered. Residues 482–614 (EVRQKCRNIE…LQMFFANNHD (133 aa)) enclose the ADD domain. The segment at 493-523 (ICISCGSLNVTLEHPLFVGGMCQNCKNCFLE) adopts a GATA-type; atypical zinc-finger fold. An interaction with the PRC2/EED-EZH2 complex region spans residues 494 to 586 (CISCGSLNVT…KEDPWNCYMC (93 aa)). A PHD-type; atypical zinc finger spans residues 534 to 590 (QSYCTICCGGREVLMCGNNNCCRCFCVECVDLLVGPGAAQAAIKEDPWNCYMCGHKG). Positions 634–912 (IRVLSLFDGI…APLKEYFACV (279 aa)) constitute an SAM-dependent MTase C5-type domain. Residues 641-645 (DGIAT), Glu-664, and 686-688 (DVR) contribute to the S-adenosyl-L-methionine site. The active site involves Cys-710. The residue at position 710 (Cys-710) is an S-methylcysteine; by autocatalysis. Position 891–893 (891–893 (RSW)) interacts with S-adenosyl-L-methionine.

Belongs to the class I-like SAM-binding methyltransferase superfamily. C5-methyltransferase family. In terms of assembly, heterotetramer composed of 1 DNMT3A homodimer and 2 DNMT3L subunits (DNMT3L-DNMT3A-DNMT3A-DNMT3L). Interacts with UBC9, PIAS1 and PIAS2. Binds the ZBTB18 transcriptional repressor. Interacts with SETDB1. Associates with HDAC1 through its ADD domain. Interacts with UHRF1. Interacts with DNMT1 and DNMT3B. Interacts with the PRC2/EED-EZH2 complex. Interacts with MPHOSPH8. Interacts with histone H3 that is not methylated at 'Lys-4' (H3K4). Interacts with SPOCD1. Interacts with ZNF263; recruited to the SIX3 promoter along with other proteins involved in chromatin modification and transcriptional corepression where it contributes to transcriptional repression. Sumoylated; sumoylation disrupts the ability to interact with histone deacetylases (HDAC1 and HDAC2) and repress transcription. Post-translationally, auto-methylated at Cys-710: auto-methylation takes place in absence of DNA substrate and inactivates the DNA methyltransferase activity. Inactivation by auto-methylation may be used to inactivate unused DNA methyltransferases in the cell. Highly expressed in fetal tissues, skeletal muscle, heart, peripheral blood mononuclear cells, kidney, and at lower levels in placenta, brain, liver, colon, spleen, small intestine and lung.

The protein resides in the nucleus. Its subcellular location is the chromosome. The protein localises to the cytoplasm. The catalysed reaction is a 2'-deoxycytidine in DNA + S-adenosyl-L-methionine = a 5-methyl-2'-deoxycytidine in DNA + S-adenosyl-L-homocysteine + H(+). It catalyses the reaction L-cysteinyl-[protein] + S-adenosyl-L-methionine = S-methyl-L-cysteinyl-[protein] + S-adenosyl-L-homocysteine + H(+). Activated by binding to the regulatory factor DNMT3L. Auto-methylation at Cys-710 in absence of DNA inactivates the DNA methyltransferase activity. Its function is as follows. Required for genome-wide de novo methylation and is essential for the establishment of DNA methylation patterns during development. DNA methylation is coordinated with methylation of histones. It modifies DNA in a non-processive manner and also methylates non-CpG sites. May preferentially methylate DNA linker between 2 nucleosomal cores and is inhibited by histone H1. Plays a role in paternal and maternal imprinting. Required for methylation of most imprinted loci in germ cells. Acts as a transcriptional corepressor for ZBTB18. Recruited to trimethylated 'Lys-36' of histone H3 (H3K36me3) sites. Can actively repress transcription through the recruitment of HDAC activity. Also has weak auto-methylation activity on Cys-710 in absence of DNA. This is DNA (cytosine-5)-methyltransferase 3A (DNMT3A) from Homo sapiens (Human).